The primary structure comprises 447 residues: Phosphoglucosamine mutase (447 aa).

Catalysis depends on S102, which acts as the Phosphoserine intermediate. 4 residues coordinate Mg(2+): S102, D241, D243, and D245. S102 is modified (phosphoserine).

This sequence belongs to the phosphohexose mutase family. Mg(2+) serves as cofactor. Activated by phosphorylation.

It catalyses the reaction alpha-D-glucosamine 1-phosphate = D-glucosamine 6-phosphate. Its function is as follows. Catalyzes the conversion of glucosamine-6-phosphate to glucosamine-1-phosphate. In Delftia acidovorans (strain DSM 14801 / SPH-1), this protein is Phosphoglucosamine mutase.